A 274-amino-acid chain; its full sequence is 4-deoxy-L-threo-5-hexosulose-uronate ketol-isomerase (274 aa).

The Zn(2+) site is built by H192, H194, E199, and H241.

The protein belongs to the KduI family. Zn(2+) serves as cofactor.

The enzyme catalyses 5-dehydro-4-deoxy-D-glucuronate = 3-deoxy-D-glycero-2,5-hexodiulosonate. The protein operates within glycan metabolism; pectin degradation; 2-dehydro-3-deoxy-D-gluconate from pectin: step 4/5. Its function is as follows. Catalyzes the isomerization of 5-dehydro-4-deoxy-D-glucuronate to 3-deoxy-D-glycero-2,5-hexodiulosonate. The chain is 4-deoxy-L-threo-5-hexosulose-uronate ketol-isomerase from Shigella boydii serotype 18 (strain CDC 3083-94 / BS512).